Reading from the N-terminus, the 514-residue chain is ATP synthase subunit alpha (514 aa).

Glycine 170–threonine 177 serves as a coordination point for ATP.

This sequence belongs to the ATPase alpha/beta chains family. In terms of assembly, F-type ATPases have 2 components, CF(1) - the catalytic core - and CF(0) - the membrane proton channel. CF(1) has five subunits: alpha(3), beta(3), gamma(1), delta(1), epsilon(1). CF(0) has three main subunits: a(1), b(2) and c(9-12). The alpha and beta chains form an alternating ring which encloses part of the gamma chain. CF(1) is attached to CF(0) by a central stalk formed by the gamma and epsilon chains, while a peripheral stalk is formed by the delta and b chains.

It localises to the cell inner membrane. The catalysed reaction is ATP + H2O + 4 H(+)(in) = ADP + phosphate + 5 H(+)(out). Its function is as follows. Produces ATP from ADP in the presence of a proton gradient across the membrane. The alpha chain is a regulatory subunit. This Pseudomonas fluorescens (strain Pf0-1) protein is ATP synthase subunit alpha.